We begin with the raw amino-acid sequence, 322 residues long: tRNA-dihydrouridine synthase B (322 aa).

Residues proline 16–alanine 18 and glutamine 70 contribute to the FMN site. Catalysis depends on cysteine 100, which acts as the Proton donor. Residues lysine 139, asparagine 200–aspartate 202, and glycine 224–arginine 225 contribute to the FMN site.

The protein belongs to the Dus family. DusB subfamily. FMN serves as cofactor.

It carries out the reaction a 5,6-dihydrouridine in tRNA + NAD(+) = a uridine in tRNA + NADH + H(+). The catalysed reaction is a 5,6-dihydrouridine in tRNA + NADP(+) = a uridine in tRNA + NADPH + H(+). Its function is as follows. Catalyzes the synthesis of 5,6-dihydrouridine (D), a modified base found in the D-loop of most tRNAs, via the reduction of the C5-C6 double bond in target uridines. This chain is tRNA-dihydrouridine synthase B, found in Vibrio vulnificus (strain CMCP6).